Here is a 510-residue protein sequence, read N- to C-terminus: Maturase K (510 aa).

It belongs to the intron maturase 2 family. MatK subfamily.

Its subcellular location is the plastid. It is found in the chloroplast. In terms of biological role, usually encoded in the trnK tRNA gene intron. Probably assists in splicing its own and other chloroplast group II introns. The protein is Maturase K of Anomochloa marantoidea (Herbaceous bamboo).